A 332-amino-acid chain; its full sequence is Biotin synthase (332 aa).

The Radical SAM core domain occupies 53–282 (YFGKKVKLNM…TKEIRISGGR (230 aa)). [4Fe-4S] cluster-binding residues include cysteine 71, cysteine 75, and cysteine 78. Cysteine 115, cysteine 147, cysteine 207, and arginine 277 together coordinate [2Fe-2S] cluster.

It belongs to the radical SAM superfamily. Biotin synthase family. As to quaternary structure, homodimer. It depends on [4Fe-4S] cluster as a cofactor. [2Fe-2S] cluster is required as a cofactor.

The enzyme catalyses (4R,5S)-dethiobiotin + (sulfur carrier)-SH + 2 reduced [2Fe-2S]-[ferredoxin] + 2 S-adenosyl-L-methionine = (sulfur carrier)-H + biotin + 2 5'-deoxyadenosine + 2 L-methionine + 2 oxidized [2Fe-2S]-[ferredoxin]. It participates in cofactor biosynthesis; biotin biosynthesis; biotin from 7,8-diaminononanoate: step 2/2. Functionally, catalyzes the conversion of dethiobiotin (DTB) to biotin by the insertion of a sulfur atom into dethiobiotin via a radical-based mechanism. The protein is Biotin synthase of Bacillus anthracis.